The sequence spans 343 residues: Fructose-1,6-bisphosphatase, cytosolic (343 aa).

5 residues coordinate Mg(2+): E71, E100, D121, L123, and D124. Residues 124 to 127 (DGSS), N215, Y247, Y267, and K277 contribute to the substrate site. E283 provides a ligand contact to Mg(2+).

It belongs to the FBPase class 1 family. Mg(2+) serves as cofactor.

The protein localises to the cytoplasm. The catalysed reaction is beta-D-fructose 1,6-bisphosphate + H2O = beta-D-fructose 6-phosphate + phosphate. This Saccharum hybrid (Sugarcane) protein is Fructose-1,6-bisphosphatase, cytosolic (CFBP).